The sequence spans 157 residues: Dihydrofolate reductase type 1 (157 aa).

The DHFR domain occupies lysine 2–lysine 156.

It belongs to the dihydrofolate reductase family. In terms of assembly, homodimer.

It catalyses the reaction (6S)-5,6,7,8-tetrahydrofolate + NADP(+) = 7,8-dihydrofolate + NADPH + H(+). Its pathway is cofactor biosynthesis; tetrahydrofolate biosynthesis; 5,6,7,8-tetrahydrofolate from 7,8-dihydrofolate: step 1/1. Functionally, key enzyme in folate metabolism. Catalyzes an essential reaction for de novo glycine and purine synthesis, and for DNA precursor synthesis. This is Dihydrofolate reductase type 1 (dhfrI) from Escherichia coli.